A 370-amino-acid chain; its full sequence is Putative agmatine deiminase (370 aa).

Cysteine 361 functions as the Amidino-cysteine intermediate in the catalytic mechanism.

Belongs to the agmatine deiminase family.

It carries out the reaction agmatine + H2O = N-carbamoylputrescine + NH4(+). The polypeptide is Putative agmatine deiminase (Shewanella baltica (strain OS185)).